The sequence spans 225 residues: Endonuclease V (225 aa).

Residues Asp-43 and Asp-110 each contribute to the Mg(2+) site.

It belongs to the endonuclease V family. The cofactor is Mg(2+).

It localises to the cytoplasm. The enzyme catalyses Endonucleolytic cleavage at apurinic or apyrimidinic sites to products with a 5'-phosphate.. Its function is as follows. DNA repair enzyme involved in the repair of deaminated bases. Selectively cleaves double-stranded DNA at the second phosphodiester bond 3' to a deoxyinosine leaving behind the intact lesion on the nicked DNA. The chain is Endonuclease V from Thermotoga petrophila (strain ATCC BAA-488 / DSM 13995 / JCM 10881 / RKU-1).